Reading from the N-terminus, the 314-residue chain is Malate dehydrogenase (314 aa).

NAD(+) contacts are provided by residues 13–18 and D37; that span reads GGGQIG. Residues R88 and R94 each contribute to the substrate site. Residues N101 and 124 to 126 each bind NAD(+); that span reads VAN. 2 residues coordinate substrate: N126 and R157. The Proton acceptor role is filled by H181.

The protein belongs to the LDH/MDH superfamily. MDH type 3 family.

The catalysed reaction is (S)-malate + NAD(+) = oxaloacetate + NADH + H(+). In terms of biological role, catalyzes the reversible oxidation of malate to oxaloacetate. In Myxococcus xanthus, this protein is Malate dehydrogenase.